Here is a 105-residue protein sequence, read N- to C-terminus: Large ribosomal subunit protein eL36 (105 aa).

N6-acetyllysine is present on K62.

Belongs to the eukaryotic ribosomal protein eL36 family. Component of the large ribosomal subunit.

It localises to the cytoplasm. The protein localises to the cytosol. Its function is as follows. Component of the large ribosomal subunit. The ribosome is a large ribonucleoprotein complex responsible for the synthesis of proteins in the cell. The chain is Large ribosomal subunit protein eL36 (RPL36) from Homo sapiens (Human).